Reading from the N-terminus, the 357-residue chain is Retinoic acid-induced protein 3 (357 aa).

Residues 1–33 (MATTVPDGCRNGLKSKYYRLCDKAEAWGIVLET) lie on the Extracellular side of the membrane. The helical transmembrane segment at 34 to 54 (VATAGVVTSVAFMLTLPILVC) threads the bilayer. The Cytoplasmic portion of the chain corresponds to 55-68 (KVQDSNRRKMLPTQ). A helical transmembrane segment spans residues 69-89 (FLFLLGVLGIFGLTFAFIIGL). The Extracellular segment spans residues 90–97 (DGSTGPTR). A helical membrane pass occupies residues 98–118 (FFLFGILFSICFSCLLAHAVS). Residues 119–129 (LTKLVRGRKPL) lie on the Cytoplasmic side of the membrane. A helical transmembrane segment spans residues 130–150 (SLLVILGLAVGFSLVQDVIAI). Residues 151-176 (EYIVLTMNRTNVNVFSELSAPRRNED) lie on the Extracellular side of the membrane. Asn158 carries an N-linked (GlcNAc...) asparagine glycan. A helical transmembrane segment spans residues 177 to 197 (FVLLLTYVLFLMALTFLMSSF). The Cytoplasmic portion of the chain corresponds to 198 to 212 (TFCGSFTGWKRHGAH). A helical transmembrane segment spans residues 213–233 (IYLTMLLSIAIWVAWITLLML). Residues 234–247 (PDFDRRWDDTILSS) lie on the Extracellular side of the membrane. Residues 248 to 268 (ALAANGWVFLLAYVSPEFWLL) form a helical membrane-spanning segment. Over 269–357 (TKQRNPMDYP…KDYEVKKEGS (89 aa)) the chain is Cytoplasmic. A Phosphoserine modification is found at Ser301. 2 positions are modified to phosphotyrosine: Tyr317 and Tyr320. Residue Ser345 is modified to Phosphoserine. Tyr347 and Tyr350 each carry phosphotyrosine.

Belongs to the G-protein coupled receptor 3 family. In terms of assembly, interacts (via its transmembrane domain) with EGFR. Phosphorylated in two conserved double-tyrosine motifs, Tyr-317/Tyr-320 and Tyr-347/Tyr-350, by EGFR; leading to inactivation of the tumor suppressive function of GPRC5A in lung cancer cells. Tyr-317 and Tyr-320 are the preferred residues responsible for EGFR-mediated GPRC5A phosphorylation. As to expression, expressed at high level in fetal and adult lung tissues but repressed in most human lung cancers. Constitutively expressed in fetal kidney and adult placenta, kidney, prostate, testis, ovary, small intestine, colon, stomach, and spinal cord at low to moderate levels. Not detectable in fetal heart, brain, and liver and adult heart, brain, liver, skeletal muscle, pancreas, spleen, thymus, and peripheral leukocytes. According to PubMed:10783259, expressed at low but detectable level in pancreas and heart.

The protein resides in the cell membrane. It localises to the cytoplasmic vesicle membrane. Its function is as follows. Orphan receptor. Could be involved in modulating differentiation and maintaining homeostasis of epithelial cells. This retinoic acid-inducible GPCR provide evidence for a possible interaction between retinoid and G-protein signaling pathways. Functions as a negative modulator of EGFR signaling. May act as a lung tumor suppressor. In Homo sapiens (Human), this protein is Retinoic acid-induced protein 3 (GPRC5A).